A 228-amino-acid polypeptide reads, in one-letter code: Thermonuclease (228 aa).

An N-terminal signal peptide occupies residues 1–23 (MTEYLLSAGICMAIVSILLIGMA). The propeptide occupies 24–60 (ISNVSKGQYAKRFFYFATSCLVLTLVVVSSLSSSANA). Residues 58-70 (ANASQTDNGVNRS) are compositionally biased toward polar residues. The interval 58-83 (ANASQTDNGVNRSGSEDPTVYSATST) is disordered. D100 is a binding site for Ca(2+). R114 is an active-site residue. Residues D119 and T120 each contribute to the Ca(2+) site. Catalysis depends on residues E122 and R166.

This sequence belongs to the thermonuclease family. Ca(2+) is required as a cofactor.

Its subcellular location is the secreted. It catalyses the reaction Endonucleolytic cleavage to nucleoside 3'-phosphates and 3'-phosphooligonucleotide end-products.. Its function is as follows. Enzyme that catalyzes the hydrolysis of both DNA and RNA at the 5' position of the phosphodiester bond. The sequence is that of Thermonuclease (nuc) from Staphylococcus aureus (strain COL).